Here is a 273-residue protein sequence, read N- to C-terminus: Probable ribosomal RNA small subunit methyltransferase A (273 aa).

Positions 23, 25, 50, 71, 95, and 110 each coordinate S-adenosyl-L-methionine.

Belongs to the class I-like SAM-binding methyltransferase superfamily. rRNA adenine N(6)-methyltransferase family. RsmA subfamily.

The protein localises to the cytoplasm. In terms of biological role, specifically dimethylates two adjacent adenosines in the loop of a conserved hairpin near the 3'-end of 16S rRNA in the 30S particle. May play a critical role in biogenesis of 30S subunits. The chain is Probable ribosomal RNA small subunit methyltransferase A from Thermococcus sibiricus (strain DSM 12597 / MM 739).